The following is a 236-amino-acid chain: Phosphoribosylaminoimidazole-succinocarboxamide synthase (236 aa).

This sequence belongs to the SAICAR synthetase family.

It catalyses the reaction 5-amino-1-(5-phospho-D-ribosyl)imidazole-4-carboxylate + L-aspartate + ATP = (2S)-2-[5-amino-1-(5-phospho-beta-D-ribosyl)imidazole-4-carboxamido]succinate + ADP + phosphate + 2 H(+). It functions in the pathway purine metabolism; IMP biosynthesis via de novo pathway; 5-amino-1-(5-phospho-D-ribosyl)imidazole-4-carboxamide from 5-amino-1-(5-phospho-D-ribosyl)imidazole-4-carboxylate: step 1/2. In Campylobacter concisus (strain 13826), this protein is Phosphoribosylaminoimidazole-succinocarboxamide synthase.